Here is a 340-residue protein sequence, read N- to C-terminus: DNA-directed RNA polymerase subunit alpha (340 aa).

Residues 1 to 236 form an alpha N-terminal domain (alpha-NTD) region; sequence MLSLSKNWNT…EQLQLFISFE (236 aa). The segment at 251–340 is alpha C-terminal domain (alpha-CTD); that stretch reads FSPYLLKRVD…LSKRYEDSYN (90 aa).

This sequence belongs to the RNA polymerase alpha chain family. Homodimer. The RNAP catalytic core consists of 2 alpha, 1 beta, 1 beta' and 1 omega subunit. When a sigma factor is associated with the core the holoenzyme is formed, which can initiate transcription.

The catalysed reaction is RNA(n) + a ribonucleoside 5'-triphosphate = RNA(n+1) + diphosphate. Its function is as follows. DNA-dependent RNA polymerase catalyzes the transcription of DNA into RNA using the four ribonucleoside triphosphates as substrates. The protein is DNA-directed RNA polymerase subunit alpha of Rickettsia africae (strain ESF-5).